We begin with the raw amino-acid sequence, 295 residues long: Tyrosine recombinase XerD (295 aa).

Residues 1–85 (MDTIIEEYLK…TIRSFHQFAL (85 aa)) form the Core-binding (CB) domain. The 184-residue stretch at 106-289 (KLPDVLEINE…SKSQIRKMYN (184 aa)) folds into the Tyr recombinase domain. Catalysis depends on residues Arg146, Lys170, His241, Arg244, and His267. Residue Tyr276 is the O-(3'-phospho-DNA)-tyrosine intermediate of the active site.

The protein belongs to the 'phage' integrase family. XerD subfamily. As to quaternary structure, forms a cyclic heterotetrameric complex composed of two molecules of XerC and two molecules of XerD.

It is found in the cytoplasm. Functionally, site-specific tyrosine recombinase, which acts by catalyzing the cutting and rejoining of the recombining DNA molecules. The XerC-XerD complex is essential to convert dimers of the bacterial chromosome into monomers to permit their segregation at cell division. It also contributes to the segregational stability of plasmids. The protein is Tyrosine recombinase XerD of Staphylococcus saprophyticus subsp. saprophyticus (strain ATCC 15305 / DSM 20229 / NCIMB 8711 / NCTC 7292 / S-41).